The following is a 287-amino-acid chain: Large ribosomal subunit protein uL2 (287 aa).

The disordered stretch occupies residues 221–287 (RGSVMNPCDH…SKRSRGGRDS (67 aa)). The span at 258-287 (KTRKKNKPSNKLVVRRRRRISKRSRGGRDS) shows a compositional bias: basic residues.

Belongs to the universal ribosomal protein uL2 family. In terms of assembly, part of the 50S ribosomal subunit. Forms a bridge to the 30S subunit in the 70S ribosome.

Functionally, one of the primary rRNA binding proteins. Required for association of the 30S and 50S subunits to form the 70S ribosome, for tRNA binding and peptide bond formation. It has been suggested to have peptidyltransferase activity; this is somewhat controversial. Makes several contacts with the 16S rRNA in the 70S ribosome. This is Large ribosomal subunit protein uL2 from Prochlorococcus marinus subsp. pastoris (strain CCMP1986 / NIES-2087 / MED4).